The following is a 241-amino-acid chain: Small ribosomal subunit protein uS2 (241 aa).

Belongs to the universal ribosomal protein uS2 family.

The chain is Small ribosomal subunit protein uS2 from Proteus mirabilis (strain HI4320).